The sequence spans 453 residues: DNA repair protein RadA (453 aa).

A C4-type zinc finger spans residues 11 to 28 (CNQCGATAPKWLGQCPGC). ATP is bound at residue 93-100 (GDPGIGKS). A RadA KNRFG motif motif is present at residues 250–254 (KNRFG). Residues 349–453 (DVFLSITGGL…TIKDAIRLLL (105 aa)) form a lon-protease-like region.

This sequence belongs to the RecA family. RadA subfamily.

Its function is as follows. DNA-dependent ATPase involved in processing of recombination intermediates, plays a role in repairing DNA breaks. Stimulates the branch migration of RecA-mediated strand transfer reactions, allowing the 3' invading strand to extend heteroduplex DNA faster. Binds ssDNA in the presence of ADP but not other nucleotides, has ATPase activity that is stimulated by ssDNA and various branched DNA structures, but inhibited by SSB. Does not have RecA's homology-searching function. This is DNA repair protein RadA from Chlamydia pneumoniae (Chlamydophila pneumoniae).